The chain runs to 43 residues: KCNPKGFTNEGCRGIDKKHWNSQCRTSQSYVRALTMDSRKKIG.

Belongs to the NGF-beta family.

It localises to the secreted. In terms of biological role, promotes the survival of neuronal populations that are all located either in the central nervous system or directly connected to it. The sequence is that of Neurotrophic factor BDNF (bdnf) from Raja clavata (Thornback ray).